Consider the following 1415-residue polypeptide: DNA-directed RNA polymerase subunit beta' (1415 aa).

Zn(2+)-binding residues include Cys214, Cys294, Cys301, and Cys304. The segment covering 1335–1351 (QNFVDSQGKPQSQSSFI) has biased composition (polar residues). Positions 1335 to 1390 (QNFVDSQGKPQSQSSFIDDSMSEFSPVKDKSGSVLDDSDFPPGNFDSDFPADNYDL) are disordered.

Belongs to the RNA polymerase beta' chain family. RpoC2 subfamily. As to quaternary structure, in cyanobacteria the RNAP catalytic core is composed of 2 alpha, 1 beta, 1 beta', 1 gamma and 1 omega subunit. When a sigma factor is associated with the core the holoenzyme is formed, which can initiate transcription. Zn(2+) serves as cofactor.

The catalysed reaction is RNA(n) + a ribonucleoside 5'-triphosphate = RNA(n+1) + diphosphate. Functionally, DNA-dependent RNA polymerase catalyzes the transcription of DNA into RNA using the four ribonucleoside triphosphates as substrates. The polypeptide is DNA-directed RNA polymerase subunit beta' (Trichodesmium erythraeum (strain IMS101)).